A 406-amino-acid chain; its full sequence is MNFPIERVRADFPLLSRQVNGQPLVYLDSAASAQKPQAVIDKELHFYRDGYAAVHRGIHSLSAEATQQMEAVRTQVADFIHAASAEEIIFVRGTTEAINLVANSYGRHFLAAGDSIIITEMEHHANIVPWQMLAQDLGVEIRVWPLTATGELEITALAALIDDTTRLLAVTQVSNVLGTVNPIKDIVAQAKAAGLVVLVDGAQAVMHQPVDVQALGCDFYVFSGHKLYGPSGIGILYGKSALLQQMPPWEGGGAMIKTVSLTQGTTFADAPWRFEAGSPNTAGIMGLGAAIDYVTELGLLPIQQYEQSLMHYALAQLSQIKSLTLYGPTERAGVIAFNLGQHHAYDVGSFLDQYGIAIRTGHHCAMPLMAFYQVPSMCRASLALYNTREDVDRLVAGLQRIEKLLG.

Lysine 226 carries the post-translational modification N6-(pyridoxal phosphate)lysine. Cysteine 364 serves as the catalytic Cysteine persulfide intermediate.

Belongs to the class-V pyridoxal-phosphate-dependent aminotransferase family. Csd subfamily. As to quaternary structure, homodimer. Interacts with SufE and the SufBCD complex composed of SufB, SufC and SufD. The interaction with SufE is required to mediate the direct transfer of the sulfur atom from the S-sulfanylcysteine. The cofactor is pyridoxal 5'-phosphate.

The protein resides in the cytoplasm. The catalysed reaction is (sulfur carrier)-H + L-cysteine = (sulfur carrier)-SH + L-alanine. The enzyme catalyses L-selenocysteine + AH2 = hydrogenselenide + L-alanine + A + H(+). The protein operates within cofactor biosynthesis; iron-sulfur cluster biosynthesis. Its function is as follows. Cysteine desulfurases mobilize the sulfur from L-cysteine to yield L-alanine, an essential step in sulfur metabolism for biosynthesis of a variety of sulfur-containing biomolecules. Component of the suf operon, which is activated and required under specific conditions such as oxidative stress and iron limitation. Acts as a potent selenocysteine lyase in vitro, that mobilizes selenium from L-selenocysteine. Selenocysteine lyase activity is however unsure in vivo. The polypeptide is Cysteine desulfurase (Yersinia pestis bv. Antiqua (strain Antiqua)).